The following is a 289-amino-acid chain: Aquaporin PIP2-3 (289 aa).

The interval 1 to 25 is disordered; the sequence is MAKQDIEASGPEAGEFSAKDYTDPP. The next 2 helical transmembrane spans lie at 43-63 and 80-100; these read AVIA…ATVI and CGGV…FILV. The NPA 1 signature appears at 112–114; that stretch reads NPA. A run of 3 helical transmembrane segments spans residues 131-151, 173-193, and 207-227; these read LLYI…VKGF, GTGL…VFSA, and VLAP…TIPI. The short motif at 233–235 is the NPA 2 element; that stretch reads NPA. The chain crosses the membrane as a helical span at residues 255-275; sequence IFWVGPLIGAAIAAAYHQYVL.

The protein belongs to the MIP/aquaporin (TC 1.A.8) family. PIP (TC 1.A.8.11) subfamily.

It localises to the cell membrane. Functionally, aquaporins facilitate the transport of water and small neutral solutes across cell membranes. The chain is Aquaporin PIP2-3 (PIP2-3) from Zea mays (Maize).